A 419-amino-acid chain; its full sequence is Protein-lysine N-methyltransferase EFM2 (419 aa).

S-adenosyl-L-methionine is bound by residues W222, 261-263 (GAG), D290, W318, and A340.

It belongs to the class I-like SAM-binding methyltransferase superfamily. METTL21 family.

It localises to the cytoplasm. S-adenosyl-L-methionine-dependent protein-lysine N-methyltransferase that mono- and dimethylates elongation factor 2 (EFT1/EFT2) at 'Lys-613' and methylates elongation factor 3A (YEF3). This is Protein-lysine N-methyltransferase EFM2 from Saccharomyces cerevisiae (strain ATCC 204508 / S288c) (Baker's yeast).